A 337-amino-acid chain; its full sequence is Pantothenate synthetase (337 aa).

31–38 provides a ligand contact to ATP; the sequence is MGALHEGH. The Proton donor role is filled by His38. Gln65 is a binding site for (R)-pantoate. Residue Gln65 participates in beta-alanine binding. 152–155 is an ATP binding site; the sequence is GQKD. Gln158 contacts (R)-pantoate. Residues Val181 and 189–192 each bind ATP; that span reads LSSR.

It belongs to the pantothenate synthetase family. Homodimer.

Its subcellular location is the cytoplasm. The enzyme catalyses (R)-pantoate + beta-alanine + ATP = (R)-pantothenate + AMP + diphosphate + H(+). Its pathway is cofactor biosynthesis; (R)-pantothenate biosynthesis; (R)-pantothenate from (R)-pantoate and beta-alanine: step 1/1. Catalyzes the condensation of pantoate with beta-alanine in an ATP-dependent reaction via a pantoyl-adenylate intermediate. This is Pantothenate synthetase from Streptomyces coelicolor (strain ATCC BAA-471 / A3(2) / M145).